A 78-amino-acid chain; its full sequence is Keratin-associated protein 6-5 (78 aa).

The tract at residues 3–76 is 25 X 2 AA repeats of G-[YCGS]; sequence GYYGNYYGGR…GSGYGSGFGY (74 aa).

It belongs to the KRTAP type 6 family. As to quaternary structure, interacts with hair keratins. Strong expression in narrowly defined pattern restricted to the lower and middle cortical regions of the hair shaft in both developing and cycling hair. During hair follicle regression (catagen), expression levels decrease until expression is no longer detectable in follicles at resting stage (telogen).

Functionally, in the hair cortex, hair keratin intermediate filaments are embedded in an interfilamentous matrix, consisting of hair keratin-associated proteins (KRTAP), which are essential for the formation of a rigid and resistant hair shaft through their extensive disulfide bond cross-linking with abundant cysteine residues of hair keratins. The matrix proteins include the high-sulfur and high-glycine-tyrosine keratins. This is Keratin-associated protein 6-5 (Krtap6-5) from Mus musculus (Mouse).